The chain runs to 296 residues: MEQFRNIGIIGRLGSVQVLDTVRRLKRFLLDRHLHVILEETIAEVLPGHGLQTSSRKMLGEVCDMVIVVGGDGSLLGAARALARHNVPVLGINRGSLGFLTDIRPDELEVKCAEVLDGHYLVENRFLLQAEVRRHGEAIGQGDALNDVVLHPGKSTRMIEFEIYIDGQFVCSQKADGLIVATPTGSTAYALSAGGPIMHPKLDAIVIVPMYPHTLSGRPIVVDGNSELKIVVSKDMTIYPQVSCDGQNHFTCAPGDTITVSKKPQKLRLIHPLDHNYYEVCRTKLGWGSKLGGGGD.

Asp-72 acts as the Proton acceptor in catalysis. Residues 72–73 (DG), 146–147 (ND), Arg-157, Lys-174, Asp-176, 187–192 (TAYALS), and Gln-247 contribute to the NAD(+) site.

It belongs to the NAD kinase family. The cofactor is a divalent metal cation.

It localises to the cytoplasm. The catalysed reaction is NAD(+) + ATP = ADP + NADP(+) + H(+). Involved in the regulation of the intracellular balance of NAD and NADP, and is a key enzyme in the biosynthesis of NADP. Catalyzes specifically the phosphorylation on 2'-hydroxyl of the adenosine moiety of NAD to yield NADP. The chain is NAD kinase from Pseudomonas savastanoi pv. phaseolicola (strain 1448A / Race 6) (Pseudomonas syringae pv. phaseolicola (strain 1448A / Race 6)).